Reading from the N-terminus, the 267-residue chain is Levodione reductase (267 aa).

Position 17–42 (17–42 (LITGGGSGLGRATAVRLAAEGAKLSL)) interacts with NAD(+). Substrate is bound at residue Ser-152. The active-site Proton acceptor is Tyr-165.

It belongs to the short-chain dehydrogenases/reductases (SDR) family.

It carries out the reaction (4R)-hydroxy-(6R)-2,2,6-trimethylcyclohexanone + NAD(+) = (6R)-2,2,6-trimethyl-1,4-cyclohexanedione + NADH + H(+). With respect to regulation, strongly activated by monovalent cations, such as K(+), Na(+), and NH4(+). In terms of biological role, catalyzes the regio- and stereoselective reversible NAD-dependent reduction of (6R)-2,2,6-trimethyl-1,4-cyclohexanedione (levodione) to (4R,6R)-4-hydroxy-2,2,6-trimethylcyclohexanone (actinol). The chain is Levodione reductase (lvr) from Leifsonia aquatica (Corynebacterium aquaticum).